A 266-amino-acid chain; its full sequence is Undecaprenyl-diphosphatase (266 aa).

8 helical membrane passes run 1–21 (MTLLQAIILGIVQGLTEFLPV), 40–60 (LPLYVDIATNTGTFFAVLVVL), 90–110 (LLVVLGSIPTAMIGLGLKPIF), 113–133 (LNQPLYVSFALIVTGLVLWFT), 145–165 (LSWLDATIGGIAQGCAVIPGI), 188–208 (FSFLMYLVVSFGVAILGIDEV), 217–237 (PLLGMIIASFVTGYIALLWLF), and 245–265 (FKWFAPYLWVVAAITLIKVAM).

This sequence belongs to the UppP family.

The protein localises to the cell inner membrane. It carries out the reaction di-trans,octa-cis-undecaprenyl diphosphate + H2O = di-trans,octa-cis-undecaprenyl phosphate + phosphate + H(+). Its function is as follows. Catalyzes the dephosphorylation of undecaprenyl diphosphate (UPP). Confers resistance to bacitracin. The sequence is that of Undecaprenyl-diphosphatase from Acaryochloris marina (strain MBIC 11017).